The chain runs to 427 residues: Trigger factor (427 aa).

A PPIase FKBP-type domain is found at 163–248; the sequence is GDTAVIDFEG…VHEIKAKELP (86 aa).

The protein belongs to the FKBP-type PPIase family. Tig subfamily.

It localises to the cytoplasm. It catalyses the reaction [protein]-peptidylproline (omega=180) = [protein]-peptidylproline (omega=0). Functionally, involved in protein export. Acts as a chaperone by maintaining the newly synthesized protein in an open conformation. Functions as a peptidyl-prolyl cis-trans isomerase. The protein is Trigger factor of Bacillus cytotoxicus (strain DSM 22905 / CIP 110041 / 391-98 / NVH 391-98).